The sequence spans 363 residues: MAPAGSTRAKKGILERLDSGEVVVGDSGFLFTLEKRGFVKAGLWTPEAVVEHPSAVRQLHTEFLRAGADVLQTFTFSATEDNMASKWEAVNAAACDLAQEVAGGGGALVAGGICQTSLYKYHKDETRIKNIFRLQLEVFARKNVDFLIAEYFEHVEEAVWAVEVLREVGAPVAVTMCIGPEGDMHDVTPGECAVKLARAGADIIGVNCRFGPWTSLQTMKLMKEGLRDASLQAHLMVQCLGFHTPDCGKGGFVDLPEYPFGLEPRVATRWDIQKYAREAYNLGIRYIGGCCGFEPYHIRAIAEELAPERGFLPPASEKHGSWGSGLNMHTKPWIRARARREYWENLLPASGRPFCPSLSKPDA.

The Hcy-binding domain occupies K11–L305. Zn(2+) is bound by residues C208, C290, and C291. S321 carries the phosphoserine modification.

Homotetramer. Zn(2+) is required as a cofactor. Expressed in fetal heart, lung, liver, kidney and eye.

It carries out the reaction S-methyl-L-methionine + L-homocysteine = 2 L-methionine + H(+). It functions in the pathway amino-acid biosynthesis; L-methionine biosynthesis via de novo pathway; L-methionine from L-homocysteine (BhmT route): step 1/1. In terms of biological role, involved in the regulation of homocysteine metabolism. Converts homocysteine to methionine using S-methylmethionine (SMM) as a methyl donor. In Mus musculus (Mouse), this protein is S-methylmethionine--homocysteine S-methyltransferase BHMT2 (Bhmt2).